The sequence spans 390 residues: METFLFTSESVNEGHPDKLCDQVSDAILDACLEQDPESKVACETCTKTNMVMVFGEITTKATVDYEKIVRDTCRGIGFTSADVGLDADHCKVLVNIEQQSPDIAQGVHGHLTKKPEEIGAGDQGHMFGYATDETPELMPLTHVWATKLGAKLTEVRKNKTCPWLRPDGKTQVTVEYRNDNGAMIPLRVHTILISTQHDETVTNDQIAQDLKEHVIKPVVPAEYLDENTIFHLNPSGRFVIGGPHGDAGLTGRKIIIDTYGGWGAHGGGAFSGKDPTKVDRSGAYIVRQAAKSVVASGLARRCIVQVSYAIGVAEPLSVFVDTYKTGTIPDKDILTLIKENFDFRPGMMSINLDLLRGGNFRYQKTAAYGHFGRDDPDFTWETVKVLNPQA.

Glu9 contacts Mg(2+). His15 is an ATP binding site. K(+) is bound at residue Glu43. L-methionine contacts are provided by Glu56 and Gln99. ATP-binding positions include 167–169, 235–238, Asp246, 252–253, Ala269, Lys273, and Lys277; these read DGK, SGRF, and RK. Asp246 contacts L-methionine. L-methionine is bound at residue Lys277.

This sequence belongs to the AdoMet synthase family. In terms of assembly, homotetramer. It depends on Mn(2+) as a cofactor. The cofactor is Mg(2+). Co(2+) serves as cofactor. K(+) is required as a cofactor.

It localises to the cytoplasm. It carries out the reaction L-methionine + ATP + H2O = S-adenosyl-L-methionine + phosphate + diphosphate. Its pathway is amino-acid biosynthesis; S-adenosyl-L-methionine biosynthesis; S-adenosyl-L-methionine from L-methionine: step 1/1. In terms of biological role, catalyzes the formation of S-adenosylmethionine from methionine and ATP. The reaction comprises two steps that are both catalyzed by the same enzyme: formation of S-adenosylmethionine (AdoMet) and triphosphate, and subsequent hydrolysis of the triphosphate. This Petunia hybrida (Petunia) protein is S-adenosylmethionine synthase 1 (SAM1).